The sequence spans 347 residues: Molybdenum cofactor biosynthesis bifunctional protein (347 aa).

A molybdenum cofactor biosynthesis protein C region spans residues 1–158; the sequence is MFTHLDENQQ…EKTGGKADVS (158 aa). Substrate-binding positions include 75–77 and 116–117; these read FCH and ME. Asp131 serves as the catalytic For MoaC activity. Residues 159–347 form a molybdenum cofactor guanylyltransferase region; the sequence is QTPLYGLVLT…NSPEDYGQIN (189 aa). GTP is bound by residues 167–169, Lys179, Asp226, and Asp255; that span reads LTG. Asp255 contacts Mg(2+).

It in the N-terminal section; belongs to the MoaC family. In the C-terminal section; belongs to the MobA family. It depends on Mg(2+) as a cofactor.

The protein resides in the cytoplasm. It catalyses the reaction Mo-molybdopterin + GTP + H(+) = Mo-molybdopterin guanine dinucleotide + diphosphate. The catalysed reaction is (8S)-3',8-cyclo-7,8-dihydroguanosine 5'-triphosphate = cyclic pyranopterin phosphate + diphosphate. The protein operates within cofactor biosynthesis; molybdopterin biosynthesis. Functionally, catalyzes the conversion of (8S)-3',8-cyclo-7,8-dihydroguanosine 5'-triphosphate to cyclic pyranopterin monophosphate (cPMP). Its function is as follows. Transfers a GMP moiety from GTP to Mo-molybdopterin (Mo-MPT) cofactor (Moco or molybdenum cofactor) to form Mo-molybdopterin guanine dinucleotide (Mo-MGD) cofactor. The chain is Molybdenum cofactor biosynthesis bifunctional protein (moaC/mobA) from Synechocystis sp. (strain ATCC 27184 / PCC 6803 / Kazusa).